We begin with the raw amino-acid sequence, 232 residues long: Fibrillarin-like rRNA/tRNA 2'-O-methyltransferase (232 aa).

S-adenosyl-L-methionine contacts are provided by residues 89–90, 108–109, 133–134, and 153–156; these read TT, EF, DA, and DIAQ.

The protein belongs to the methyltransferase superfamily. Fibrillarin family. As to quaternary structure, interacts with nop5. Component of box C/D small ribonucleoprotein (sRNP) particles that contain rpl7ae, FlpA and nop5, plus a guide RNA.

Its function is as follows. Involved in pre-rRNA and tRNA processing. Utilizes the methyl donor S-adenosyl-L-methionine to catalyze the site-specific 2'-hydroxyl methylation of ribose moieties in rRNA and tRNA. Site specificity is provided by a guide RNA that base pairs with the substrate. Methylation occurs at a characteristic distance from the sequence involved in base pairing with the guide RNA. This Saccharolobus islandicus (strain M.16.27) (Sulfolobus islandicus) protein is Fibrillarin-like rRNA/tRNA 2'-O-methyltransferase.